We begin with the raw amino-acid sequence, 313 residues long: Leucine zipper protein 4 (313 aa).

Positions 1 to 119 (MASFRKLTLS…PLIEQEKCSD (119 aa)) are interaction with DDX39B/UAP56. 2 disordered regions span residues 1 to 238 (MASF…QGDL) and 290 to 313 (QSGR…TITT). The UAP56-binding motif (UBM); required for proper nuclear localization signature appears at 22–40 (KVNFLDMSLDDIIIYKELE). Basic and acidic residues predominate over residues 34–60 (IIYKELEGTNAEEEKNKRQNHSKKESP). An arg-rich; required for RNA-binding region spans residues 51-80 (RQNHSKKESPSRQQSKAHRHRHRRGYSRCR). The segment covering 65–77 (SKAHRHRHRRGYS) has biased composition (basic residues). The span at 81–92 (SNSEEGNHDKKP) shows a compositional bias: basic and acidic residues. The segment covering 126–141 (EKNQGQSEGNQHQSEG) has biased composition (polar residues). Basic and acidic residues predominate over residues 142–168 (NPDKSEESQGQPEENHHSERSRNHLER). The span at 169-179 (SLSQSDRSQGQ) shows a compositional bias: polar residues. The tract at residues 178–236 (GQLKRHHPQYERSHGQYKRSHGQSERSHGHSERSHGHSERSHGHSERSHGHSKRSRSQG) is RS-containing His-rich (RS-H); necessary for nuclear localization. Positions 199 to 226 (GQSERSHGHSERSHGHSERSHGHSERSH) are enriched in basic and acidic residues. S234 is modified (phosphoserine). Positions 238–287 (LVDTQSDLIATQRDLIATQKDLIATQRDLIATQRDLIVTQRDLVATERDL) are leucine-zipper; required for RNA-binding and for its relocalization to the cytoplasm during cell division. The segment at 241 to 313 (TQSDLIATQR…YSTGKNTITT (73 aa)) is interaction with NXF1. Polar residues predominate over residues 304-313 (YSTGKNTITT).

Interacts with NXF1, NXF2, THOC1, THOC5, DDX39B/UAP56 and SRRT. As to expression, expressed specifically in testis. Also expressed in a wide variety of cancer types, but particularly high levels of expression observed in melanoma cells.

It is found in the nucleus. Its subcellular location is the cytoplasm. Functionally, export adapter involved in mRNA nuclear export in cancer cells. Binds and enhances the RNA-binding activity of the nuclear RNA export factor NXF1. Can restore mRNA export function in cells compromised by loss of mRNA export adapters. In Homo sapiens (Human), this protein is Leucine zipper protein 4 (LUZP4).